Here is a 343-residue protein sequence, read N- to C-terminus: Anthranilate phosphoribosyltransferase (343 aa).

5-phospho-alpha-D-ribose 1-diphosphate is bound by residues G86, 89–90 (GD), T94, 96–99 (NIST), 114–122 (KHGNRSASG), and S126. G86 serves as a coordination point for anthranilate. S98 is a binding site for Mg(2+). N117 contacts anthranilate. R172 provides a ligand contact to anthranilate. Mg(2+) is bound by residues D231 and E232.

It belongs to the anthranilate phosphoribosyltransferase family. As to quaternary structure, homodimer. The cofactor is Mg(2+).

It catalyses the reaction N-(5-phospho-beta-D-ribosyl)anthranilate + diphosphate = 5-phospho-alpha-D-ribose 1-diphosphate + anthranilate. Its pathway is amino-acid biosynthesis; L-tryptophan biosynthesis; L-tryptophan from chorismate: step 2/5. Catalyzes the transfer of the phosphoribosyl group of 5-phosphorylribose-1-pyrophosphate (PRPP) to anthranilate to yield N-(5'-phosphoribosyl)-anthranilate (PRA). This is Anthranilate phosphoribosyltransferase from Synechococcus sp. (strain JA-2-3B'a(2-13)) (Cyanobacteria bacterium Yellowstone B-Prime).